The chain runs to 296 residues: Diaminopimelate epimerase (296 aa).

3 residues coordinate substrate: N17, Q49, and N69. C78 (proton donor) is an active-site residue. Substrate-binding positions include 79–80 (GN), N171, N205, and 223–224 (ER). The active-site Proton acceptor is the C232. 233–234 (GT) serves as a coordination point for substrate.

It belongs to the diaminopimelate epimerase family. As to quaternary structure, homodimer.

It localises to the cytoplasm. The enzyme catalyses (2S,6S)-2,6-diaminopimelate = meso-2,6-diaminopimelate. Its pathway is amino-acid biosynthesis; L-lysine biosynthesis via DAP pathway; DL-2,6-diaminopimelate from LL-2,6-diaminopimelate: step 1/1. Catalyzes the stereoinversion of LL-2,6-diaminopimelate (L,L-DAP) to meso-diaminopimelate (meso-DAP), a precursor of L-lysine and an essential component of the bacterial peptidoglycan. The polypeptide is Diaminopimelate epimerase (Methylorubrum extorquens (strain CM4 / NCIMB 13688) (Methylobacterium extorquens)).